A 144-amino-acid chain; its full sequence is 3-hydroxyacyl-[acyl-carrier-protein] dehydratase FabZ (144 aa).

His51 is a catalytic residue.

The protein belongs to the thioester dehydratase family. FabZ subfamily.

It is found in the cytoplasm. It catalyses the reaction a (3R)-hydroxyacyl-[ACP] = a (2E)-enoyl-[ACP] + H2O. Its function is as follows. Involved in unsaturated fatty acids biosynthesis. Catalyzes the dehydration of short chain beta-hydroxyacyl-ACPs and long chain saturated and unsaturated beta-hydroxyacyl-ACPs. This Enterococcus faecalis (strain ATCC 700802 / V583) protein is 3-hydroxyacyl-[acyl-carrier-protein] dehydratase FabZ (fabZ1).